A 224-amino-acid polypeptide reads, in one-letter code: ATP synthase subunit a (224 aa).

6 consecutive transmembrane segments (helical) span residues 17–37 (FIYMTHMLLAAGIALMLVKMA), 78–98 (LVATIGLFVGIANLIGVVPGF), 104–124 (FLEFAFTLALSVFIYYNYEGI), 136–156 (FLGPVWWLYWLMFPIEIVSHF), 176–196 (FLMVILMLAPWVLPMIPYALL), and 201–221 (FLQAFIFMMLTYVYLGSAIAV).

The protein belongs to the ATPase A chain family. In terms of assembly, F-type ATPases have 2 components, CF(1) - the catalytic core - and CF(0) - the membrane proton channel. CF(1) has five subunits: alpha(3), beta(3), gamma(1), delta(1), epsilon(1). CF(0) has three main subunits: a(1), b(2) and c(9-12). The alpha and beta chains form an alternating ring which encloses part of the gamma chain. CF(1) is attached to CF(0) by a central stalk formed by the gamma and epsilon chains, while a peripheral stalk is formed by the delta and b chains.

The protein localises to the cell inner membrane. Functionally, key component of the proton channel; it plays a direct role in the translocation of protons across the membrane. In Sulfurimonas denitrificans (strain ATCC 33889 / DSM 1251) (Thiomicrospira denitrificans (strain ATCC 33889 / DSM 1251)), this protein is ATP synthase subunit a.